Consider the following 459-residue polypeptide: Bifunctional protein GlmU (459 aa).

A pyrophosphorylase region spans residues 1–229 (MSNFAIILAA…FDESLGVNDR (229 aa)). UDP-N-acetyl-alpha-D-glucosamine-binding positions include 8–11 (LAAG), Lys-22, Gln-72, and 77–78 (GT). Residue Asp-102 participates in Mg(2+) binding. Residues Gly-139, Glu-154, Asn-169, and Asn-227 each coordinate UDP-N-acetyl-alpha-D-glucosamine. Asn-227 is a binding site for Mg(2+). The linker stretch occupies residues 230-250 (VALATAESVMRRRINHKHMVN). Residues 251 to 459 (GVSFVNPEAT…TRLPHHPKNQ (209 aa)) are N-acetyltransferase. 2 residues coordinate UDP-N-acetyl-alpha-D-glucosamine: Arg-332 and Lys-350. His-362 functions as the Proton acceptor in the catalytic mechanism. Positions 365 and 376 each coordinate UDP-N-acetyl-alpha-D-glucosamine. Acetyl-CoA is bound by residues Ala-379, 385-386 (NY), Ser-404, Ala-422, and Arg-439.

In the N-terminal section; belongs to the N-acetylglucosamine-1-phosphate uridyltransferase family. This sequence in the C-terminal section; belongs to the transferase hexapeptide repeat family. In terms of assembly, homotrimer. It depends on Mg(2+) as a cofactor.

The protein localises to the cytoplasm. The enzyme catalyses alpha-D-glucosamine 1-phosphate + acetyl-CoA = N-acetyl-alpha-D-glucosamine 1-phosphate + CoA + H(+). It catalyses the reaction N-acetyl-alpha-D-glucosamine 1-phosphate + UTP + H(+) = UDP-N-acetyl-alpha-D-glucosamine + diphosphate. It participates in nucleotide-sugar biosynthesis; UDP-N-acetyl-alpha-D-glucosamine biosynthesis; N-acetyl-alpha-D-glucosamine 1-phosphate from alpha-D-glucosamine 6-phosphate (route II): step 2/2. Its pathway is nucleotide-sugar biosynthesis; UDP-N-acetyl-alpha-D-glucosamine biosynthesis; UDP-N-acetyl-alpha-D-glucosamine from N-acetyl-alpha-D-glucosamine 1-phosphate: step 1/1. It functions in the pathway bacterial outer membrane biogenesis; LPS lipid A biosynthesis. Functionally, catalyzes the last two sequential reactions in the de novo biosynthetic pathway for UDP-N-acetylglucosamine (UDP-GlcNAc). The C-terminal domain catalyzes the transfer of acetyl group from acetyl coenzyme A to glucosamine-1-phosphate (GlcN-1-P) to produce N-acetylglucosamine-1-phosphate (GlcNAc-1-P), which is converted into UDP-GlcNAc by the transfer of uridine 5-monophosphate (from uridine 5-triphosphate), a reaction catalyzed by the N-terminal domain. The sequence is that of Bifunctional protein GlmU from Streptococcus pneumoniae (strain Taiwan19F-14).